We begin with the raw amino-acid sequence, 257 residues long: Protein YIPF5 (257 aa).

Residues 1–124 (MSGFDNFNTD…KASDGSIMNE (124 aa)) are Cytoplasmic-facing. Residues 125 to 145 (TDLAGPMVFCLAFGATLLLTG) traverse the membrane as a helical segment. Lysine 146 is a topological domain (lumenal). Residues 147-167 (IQFGYVYGISAIGCLGMYCLL) form a helical membrane-spanning segment. Over 168–173 (NLMSMT) the chain is Cytoplasmic. The helical transmembrane segment at 174–194 (GVSFGCVASVLGYCLLPMIIL) threads the bilayer. The Lumenal segment spans residues 195-196 (SS). The chain crosses the membrane as a helical span at residues 197 to 217 (FGVIFSLQGIMGIILTAAIIG). Residues 218-236 (WCSLSASKIFISALAMDGQ) lie on the Cytoplasmic side of the membrane. A helical transmembrane segment spans residues 237–257 (QLLVAYPCALLYGVFALISVF).

The protein belongs to the YIP1 family.

It localises to the endoplasmic reticulum membrane. Its subcellular location is the golgi apparatus. The protein resides in the cis-Golgi network membrane. Functionally, plays a role in transport between endoplasmic reticulum and Golgi. The chain is Protein YIPF5 (yipf5) from Danio rerio (Zebrafish).